The primary structure comprises 361 residues: MGNIHIQTKSKEYDVHVGKEVLSNLTTIVQNMQPAVSNVMIISDEAVASLHLQTVIDALQVEQHVFSFVVPSGEKEKSFENFYAAHTSALENKLDRNSLILALGGGMIGDLAGFVAASFMRGIRFVQVPTTLLAHDSAVGGKVAINHPLGKNMIGAFHQPEAVVYHTPFLQSLPEKEWRSGYAEVIKHALIGDVELYHWLKEEVQTLADLHDEKLIHILTKAIPVKANVVSQDETEKGVRAHLNFGHTLGHALEKELGYGNITHGDGVAVGMLFAIFLSEQVYKVDLAYEDMKQWFLKYGYPKMPGDLNVERIVQLMKQDKKANAGAIHMVLMQEYGVVNVVSISDETVHIALEAFQKDMV.

Residues 72–77 (SGEKEK), 130–131 (TT), K142, and K151 each bind NAD(+). 3 residues coordinate Zn(2+): E184, H247, and H264.

Belongs to the sugar phosphate cyclases superfamily. Dehydroquinate synthase family. It depends on NAD(+) as a cofactor. Co(2+) is required as a cofactor. Zn(2+) serves as cofactor.

It localises to the cytoplasm. It catalyses the reaction 7-phospho-2-dehydro-3-deoxy-D-arabino-heptonate = 3-dehydroquinate + phosphate. The protein operates within metabolic intermediate biosynthesis; chorismate biosynthesis; chorismate from D-erythrose 4-phosphate and phosphoenolpyruvate: step 2/7. Functionally, catalyzes the conversion of 3-deoxy-D-arabino-heptulosonate 7-phosphate (DAHP) to dehydroquinate (DHQ). This chain is 3-dehydroquinate synthase, found in Bacillus cereus (strain ATCC 14579 / DSM 31 / CCUG 7414 / JCM 2152 / NBRC 15305 / NCIMB 9373 / NCTC 2599 / NRRL B-3711).